The chain runs to 231 residues: Large ribosomal subunit protein uL1 (231 aa).

The protein belongs to the universal ribosomal protein uL1 family. Part of the 50S ribosomal subunit.

Functionally, binds directly to 23S rRNA. The L1 stalk is quite mobile in the ribosome, and is involved in E site tRNA release. Protein L1 is also a translational repressor protein, it controls the translation of the L11 operon by binding to its mRNA. This Nitrosococcus oceani (strain ATCC 19707 / BCRC 17464 / JCM 30415 / NCIMB 11848 / C-107) protein is Large ribosomal subunit protein uL1.